The primary structure comprises 101 residues: Small ribosomal subunit protein uS14 (101 aa).

Belongs to the universal ribosomal protein uS14 family. In terms of assembly, part of the 30S ribosomal subunit. Contacts proteins S3 and S10.

Its function is as follows. Binds 16S rRNA, required for the assembly of 30S particles and may also be responsible for determining the conformation of the 16S rRNA at the A site. The protein is Small ribosomal subunit protein uS14 of Paracoccus denitrificans (strain Pd 1222).